The primary structure comprises 1818 residues: MSSLASQLQSINEKTASVALDRKQRSKLHSRSLIFDPKQAATQDYEYIYEIATEGLEDLCELDSRFNKFKSTLFSETSVNLDRNLQTKDVISQLDKNIDAFLTLVGPYYGLTSSLKAVEWLVRRFHANIHNAELMILTALPYFQHPVFVKVLNVIPKQNLPQIFEWLVGYKDQLKTPPASSILKAFRNDFHFFNFYSKFLNDQIKNHTVYKEQLVFYLSNTVQLLASFSKNIEELNETHIPVVLETTALMLLPQQKPKYSSSINSDLKLTSYSIISVLSSIFPFSADILKSLTVSILEDEDALKGFTKPTLIVLSQLWKHFQGNLEVIEAFKNFKIGQHELGVLDELKNENYQLSTFIILVFISTFPSNESYKLLPFIDLSNKTVFEIITKLVLQNSTTQEDSIRSNLTKIAQSLTKSDPKLFQTTLESENWKVDELELKLMSVLVESKNDEAEFDAGDEDNAVEDIEIVKTVDFTKLQSTAKSYFNTEYDEEFNLVLKELKSVLSASDAKLHVSVILTFLQKVFSTPEVALTFAFRVALTPAVPLSIRLSAIKSIRIKIKNAANGKTDFYLLIPLILLALFDNSKLIRSGFAQLLRLVIEIKTKLTTGAALFLEREIYGSVSDKKYPTPHDSLFLCSLLSEDNVKDTVLDPSRVINILFDSIFKAKNGKSKPGKYFRSFIFTQWSLCSLPIVLKANAWKIVAQANKAGTDDRFFFLDGDIENYFSKRNVWIDQASIAGIAFFDNAEVSVVGLVGGVASNDKNSNTESEWLCRALENPSGNLQMTANNRVLETFDTFKPIESRLKIVNKLVDILINDDIVEFDPMATLQELNIDRNLFLQALTSVQIGDQIPEQGIAKRRRRSSNSTKQAMVRDEINNMASGHLKKLTFLLEILESSLRKKRNVAGPDLLKVLFKILTDLEYLGNDGNLPVLYAQETLASCMLLNIVNLKSSSKEVKFDSNSIRADLIVNSIRASPSPQVQNRLLLVISELASLAPEVILHSVMPIFTFMGAHTVRQDDEFSSSALQQTVAKVIPALASNGLSPVNNEIEFLLASFATAFPHVPRHRRVKLFVSLTKTLGCAESMHLILFLMGQQYANNVHKNKNGDSQSVVEFVHGYMKSFSAEEQLAGIVAFTKLWNDIPLNQLEPGSEEFEVLNNRPVFGTTIATLGQSGLAVLRNDLLQFLDETLSSENKHELSSLKTKMALVLIDDEDSEVSKKESVLDKFRAITSFALASLDTFTNSHADIKLCSTLYSLLGNLLDLLPLNYFIDSIVASLDVDTLSDSLSIKVARNYAILASRKFETELNVAHCDQVVIESVINNLLPILIKGIKKNVDVELQQAYLDTFSTIVNKFGASGTEFASSDVSKVLIESLGIVTTDRGLLNEQPEVIIASINAITSIVNILGVKTLGLFPKVVPPALKIWESTNSLGDKESAKLLQGSVLVLLSCYIKKIPAFMSTTLEAVLLTILSSDLIDNHIRSSVLDLIVDHMDLAQVLKSLCNVWLTKKFYTNDNSGNIGLFLKTLQATINKMEKKQATTQATLFMRWLISAFEFRQYSEDNDNKFDNNTIHRLESSFHGCAIAFVMKLNDKSFRPLFANLVRWAVDGEGATLKTNEVSRLLAFFRFFNKLQDELKSIITSYFSYLLDPTSALLKRFSEGSLVATNLRRIILIGLTSSFKYDQDDYWSQQGRFDSICSPLLSQLSNIEDSIGKYLVKSVSTFVTDVSSDEYNETLVHELIKYISNANENSAATKIWSIRTLKTIFQKMGEQWLSYLPTLVPYIAELLEDDDEEVEMEVRRGLVRVIENVLGEPLDRYLS.

Residues 568-588 form a helical membrane-spanning segment; the sequence is TDFYLLIPLILLALFDNSKLI. The stretch at 1778–1816 is one HEAT repeat; it reads LVPYIAELLEDDDEEVEMEVRRGLVRVIENVLGEPLDRY.

This sequence belongs to the HEATR1/UTP10 family. In terms of assembly, component of the ribosomal small subunit (SSU) processome.

Its subcellular location is the nucleus. It is found in the nucleolus. The protein localises to the membrane. In terms of biological role, involved in nucleolar processing of pre-18S ribosomal RNA. Involved in ribosome biosynthesis. In Candida albicans (strain SC5314 / ATCC MYA-2876) (Yeast), this protein is U3 small nucleolar RNA-associated protein 10.